The primary structure comprises 591 residues: Protein kinase C zeta type (591 aa).

One can recognise a PB1 domain in the interval 15 to 98; the sequence is RVRLKAHYSG…DGLILHVFPS (84 aa). The interaction with SQSTM1 stretch occupies residues 79-145; the sequence is AFRLAGQHRD…KRFNRRAYCG (67 aa). The Phorbol-ester/DAG-type zinc-finger motif lies at 130-180; sequence GHLFQAKRFNRRAYCGQCSERIWGLARQGYRCINCKLLVHKRCHGLVPLTC. Residues 251 to 517 form the Protein kinase domain; it reads FDLIRVIGRG…FSDIKSHAFF (267 aa). Residues 257-265 and K280 contribute to the ATP site; that span reads IGRGSYAKV. The Proton acceptor role is filled by D375. T409 carries the phosphothreonine; by PDPK1 and PI3K modification. Residues 518-589 enclose the AGC-kinase C-terminal domain; the sequence is RSIDWDLLEK…INPLLLSTEE (72 aa). T559 carries the post-translational modification Phosphothreonine. S590 carries the post-translational modification Phosphoserine.

This sequence belongs to the protein kinase superfamily. AGC Ser/Thr protein kinase family. PKC subfamily. Interacts with PARD6A, PARD6B and PARD6G. Part of a complex with PARD3, PARD6A or PARD6B or PARD6G and CDC42 or RAC1. Interacts with ADAP1/CENTA1. Interacts directly with SQSTM1. Forms a ternary complex with SQSTM1 and KCNAB2. Forms another ternary complex with SQSTM1 and GABRR3. Forms a complex with SQSTM1 and MAP2K5. Interacts (via the protein kinase domain) with WWC1. Forms a tripartite complex with WWC1 and DDR1, but predominantly in the absence of collagen. Component of the Par polarity complex, composed of at least phosphorylated PRKCZ, PARD3 and TIAM1. Interacts with PDPK1 (via N-terminal region). Interacts with WDFY2 (via WD repeats 1-3). Interacts with VAMP2. Forms a complex with WDFY2 and VAMP2. Interacts with APPL1. Interacts with WWC1, WWC2 and WWC3. CDH5 is required for its phosphorylation at Thr-409. Phosphorylated by protein kinase PDPK1; phosphorylation is inhibited by the apoptotic C-terminal cleavage product of PKN2. Phosphorylation at Thr-409 by PI3K activates the kinase.

The protein localises to the cytoplasm. It is found in the endosome. It localises to the cell junction. The protein resides in the membrane. The enzyme catalyses L-seryl-[protein] + ATP = O-phospho-L-seryl-[protein] + ADP + H(+). The catalysed reaction is L-threonyl-[protein] + ATP = O-phospho-L-threonyl-[protein] + ADP + H(+). With respect to regulation, atypical PKCs (PRKCI and PRKCZ) exhibit an elevated basal enzymatic activity (that may be due to the interaction with SMG1 or SQSTM1) and are not regulated by diacylglycerol, phosphatidylserine, phorbol esters or calcium ions. Two specific sites, Thr-409 (activation loop of the kinase domain) and Thr-559 (turn motif), need to be phosphorylated for its full activation. Phosphatidylinositol 3,4,5-trisphosphate might be a physiological activator. Its function is as follows. Calcium- and diacylglycerol-independent serine/threonine-protein kinase that functions in phosphatidylinositol 3-kinase (PI3K) pathway and mitogen-activated protein (MAP) kinase cascade, and is involved in NF-kappa-B activation, mitogenic signaling, cell proliferation, cell polarity, inflammatory response and maintenance of long-term potentiation (LTP). Upon lipopolysaccharide (LPS) treatment in macrophages, or following mitogenic stimuli, functions downstream of PI3K to activate MAP2K1/MEK1-MAPK1/ERK2 signaling cascade independently of RAF1 activation. Required for insulin-dependent activation of AKT3, but may function as an adapter rather than a direct activator. Upon insulin treatment may act as a downstream effector of PI3K and contribute to the activation of translocation of the glucose transporter SLC2A4/GLUT4 and subsequent glucose transport in adipocytes. In EGF-induced cells, binds and activates MAP2K5/MEK5-MAPK7/ERK5 independently of its kinase activity and can activate JUN promoter through MEF2C. Through binding with SQSTM1/p62, functions in interleukin-1 signaling and activation of NF-kappa-B with the specific adapters RIPK1 and TRAF6. Participates in TNF-dependent transactivation of NF-kappa-B by phosphorylating and activating IKBKB kinase, which in turn leads to the degradation of NF-kappa-B inhibitors. In migrating astrocytes, forms a cytoplasmic complex with PARD6A and is recruited by CDC42 to function in the establishment of cell polarity along with the microtubule motor and dynein. In association with FEZ1, stimulates neuronal differentiation in PC12 cells. In the inflammatory response, is required for the T-helper 2 (Th2) differentiation process, including interleukin production, efficient activation of JAK1 and the subsequent phosphorylation and nuclear translocation of STAT6. May be involved in development of allergic airway inflammation (asthma), a process dependent on Th2 immune response. In the NF-kappa-B-mediated inflammatory response, can relieve SETD6-dependent repression of NF-kappa-B target genes by phosphorylating the RELA subunit at 'Ser-311'. Phosphorylates VAMP2 in vitro. Phosphorylates and activates LRRK1, which phosphorylates RAB proteins involved in intracellular trafficking. The protein is Protein kinase C zeta type (PRKCZ) of Oryctolagus cuniculus (Rabbit).